The primary structure comprises 1193 residues: DNA polymerase (1193 aa).

Positions 1–88 (MALVQTHGSR…PAKKKRGTVV (88 aa)) are disordered. Residues 48–68 (PATTASGSRAAPTARRASSPP) show a composition bias toward low complexity.

Belongs to the DNA polymerase type-B family. As to quaternary structure, heterodimer with the terminal protein; this heterodimer binds to bp 9 to 18 of the genome. Forms a complex with viral pTP, DBP and hosts NFIA and POU2F1/OCT1 for initiation of replication.

It is found in the host nucleus. It catalyses the reaction DNA(n) + a 2'-deoxyribonucleoside 5'-triphosphate = DNA(n+1) + diphosphate. Functionally, eukaryotic-type DNA polymerase involved in viral genomic replication. DNA synthesis is protein primed, and acts in a strand displacement replication. Assembles in complex with viral pTP, DBP, host NFIA and host POU2F1/OCT1 on viral origin of replication. The polymerase covalently transfers dCMP onto pTP, thereby initiating complementary strand synthesis. The sequence is that of DNA polymerase from Homo sapiens (Human).